The chain runs to 272 residues: Insulin-like growth factor-binding protein 5 (272 aa).

A signal peptide spans 1–20 (MVLLTAVLLLLAAYAGPAQS). One can recognise an IGFBP N-terminal domain in the interval 23–103 (SFVHCEPCDE…LHGRGVCLNE (81 aa)). Disulfide bonds link cysteine 27/cysteine 53, cysteine 30/cysteine 55, cysteine 38/cysteine 56, cysteine 45/cysteine 59, cysteine 67/cysteine 80, and cysteine 74/cysteine 100. Basic and acidic residues predominate over residues 111–122 (KIERDSREHEEP). A disordered region spans residues 111–130 (KIERDSREHEEPTTSEMAEE). The residue at position 116 (serine 116) is a Phosphoserine; by FAM20C. Residue threonine 172 is glycosylated (O-linked (HexNAc...) threonine). The region spanning 189–263 (QGPCRRHMEA…MEYVDGDFQC (75 aa)) is the Thyroglobulin type-1 domain. 3 cysteine pairs are disulfide-bonded: cysteine 192–cysteine 219, cysteine 230–cysteine 241, and cysteine 243–cysteine 263.

Interacts with IGF1; this interaction enhances the growth stimulatory effects of IGF1 on fibroblasts. Interacts with CAV1; this interaction allows trafficking of IGFBP5 from the plasma membrane to the nucleus. Interacts with NCL; this interaction is necessary for IGFBP5 localization to the nucleus. Post-translationally, cleaved by C1S in extracellular space. Osteosarcoma, and at lower levels in liver, kidney and brain.

The protein localises to the secreted. The protein resides in the cytoplasm. It is found in the nucleus. Multifunctional protein that plays a critical role in regulating the availability of IGFs to their receptors and thereby regulates IGF-mediated cellular processes including proliferation, differentiation, and apoptosis in a cell-type specific manner. Increases the cell proliferation of osteoblasts, intestinal smooth muscle cells and neuroblastoma cells. Enhances adhesion and survival of epithelial cells but decreases adhesion of mesenchymal cells. Once secreted, acts as a major mediator of mTORC1-dependent feedback inhibition of IGF1 signaling. Also plays a role in the induction of extracellular matrix (ECM) production and deposition independently of its nuclear translocation and binding to IGFs. Acts itself as a growth factor that can act independently of IGFs to regulate bone formation. Acts as a ligand for the ROR1 receptor which triggers formation of ROR1/HER2 heterodimer to enhance CREB oncogenic signaling. The protein is Insulin-like growth factor-binding protein 5 (IGFBP5) of Homo sapiens (Human).